A 198-amino-acid polypeptide reads, in one-letter code: Dual specificity protein phosphatase 14 (198 aa).

The Tyrosine-protein phosphatase domain occupies 26 to 167; sequence GIAQITSSLF…LIDYERQLFG (142 aa). C111 serves as the catalytic Phosphocysteine intermediate.

This sequence belongs to the protein-tyrosine phosphatase family. Non-receptor class dual specificity subfamily. As to quaternary structure, interacts with CD28.

It catalyses the reaction O-phospho-L-tyrosyl-[protein] + H2O = L-tyrosyl-[protein] + phosphate. It carries out the reaction O-phospho-L-seryl-[protein] + H2O = L-seryl-[protein] + phosphate. The catalysed reaction is O-phospho-L-threonyl-[protein] + H2O = L-threonyl-[protein] + phosphate. Functionally, involved in the inactivation of MAP kinases. Dephosphorylates ERK, JNK and p38 MAP-kinases. Plays a negative role in TCR signaling by dephosphorylating MAP3K7 adapter TAB1 leading to its inactivation. The protein is Dual specificity protein phosphatase 14 (DUSP14) of Homo sapiens (Human).